The sequence spans 300 residues: Haloalkane dehalogenase (300 aa).

Residues 32–155 (AIVFQHGNPT…PAVRGVFQGF (124 aa)) enclose the AB hydrolase-1 domain. Asp109 functions as the Nucleophile in the catalytic mechanism. The active-site Proton donor is the Glu133. The active-site Proton acceptor is the His273.

The protein belongs to the haloalkane dehalogenase family. Type 2 subfamily. In terms of assembly, monomer.

It catalyses the reaction 1-haloalkane + H2O = a halide anion + a primary alcohol + H(+). In terms of biological role, catalyzes hydrolytic cleavage of carbon-halogen bonds in halogenated aliphatic compounds, leading to the formation of the corresponding primary alcohols, halide ions and protons. The protein is Haloalkane dehalogenase of Mycobacterium bovis (strain ATCC BAA-935 / AF2122/97).